The following is a 562-amino-acid chain: Endochitinase (562 aa).

Residues 1–20 (MSLLYIILLFTQFLLLPTDA) form the signal peptide. A GH18 domain is found at 27–311 (TNIAVYWGQN…EILKNLLTSA (285 aa)). Catalysis depends on glutamate 157, which acts as the Proton donor. 2 disordered regions span residues 329–358 (TSSASTSSASTSQKKTTQSTTSTQSKSKVT) and 461–484 (TLSPTTTSTSSGSTSSGSTSSDST). The tract at residues 481 to 562 (SDSTARTLAK…NFSYLESNYF (82 aa)) is chitin-binding, high affinity. Asparagine 553 is a glycosylation site (N-linked (GlcNAc...) asparagine).

It belongs to the glycosyl hydrolase 18 family. Chitinase class V subfamily. Extensively glycosylated with a series of short O-linked mannose oligosaccharides ranging in size from Man(2) to Man(5).

It is found in the secreted. The protein localises to the cell wall. The catalysed reaction is Random endo-hydrolysis of N-acetyl-beta-D-glucosaminide (1-&gt;4)-beta-linkages in chitin and chitodextrins.. Functionally, chitinase is required for cell separation during growth of S.cerevisiae. In Saccharomyces cerevisiae (strain ATCC 204508 / S288c) (Baker's yeast), this protein is Endochitinase (CTS1).